The sequence spans 544 residues: MIHVRRHETRRNSKSHVPEQKSRVDWRRTKRSSISQLLDSDEELDSEEFDSDEELDSDESFENDEELDSNKGPDCNKTPGSERELNLSKIQSEGNDSKCLINSGNGSTYEEETNKIKHRNIDLQDQEKHLSQEDNDLNKQTGQIIEDDQEKHLSQEDNDLNKQTGQIIEDDLEEEDIKRGKRKRLSSVMCDSDESDDSDILVRKVGVKRPRRVVEDEGSSVEMEQKTPEKTLAAQKREKLQKLKELSKQRSRQRRSSGRDFEDSEKESCPSSDEVDEEEEEDNYESDEDGDDYIIDDFVVQDEEGDEENKNQQGEKLTTSQLKLVKQNSLYSFSDHYTHFERVVKALLINALDESFLGTLYDGTRQKSYAKDMLTSLHYLDNRFVQPRLESLVSRSRWKEQYKERVENYSNVSIHLKNPENCSCQACGLHRYCKYSVHLSGELYNTRTMQIDNFMSHDKQVFTVGRICASRTRIYHKLKHFKFKLYQECCTIAMTEEVEDEQVKETVERIFRRSKENGWIKEKYGQLEEYLNFADYFQEEKFEL.

Over residues 1 to 14 the composition is skewed to basic residues; sequence MIHVRRHETRRNSK. A disordered region spans residues 1–294; the sequence is MIHVRRHETR…ESDEDGDDYI (294 aa). Over residues 16–27 the composition is skewed to basic and acidic residues; sequence HVPEQKSRVDWR. Residues 39 to 67 show a composition bias toward acidic residues; that stretch reads DSDEELDSEEFDSDEELDSDESFENDEEL. Residues serine 88, serine 131, serine 154, serine 195, and serine 219 each carry the phosphoserine modification. The segment covering 88-108 has biased composition (polar residues); sequence SKIQSEGNDSKCLINSGNGST. The segment covering 112 to 132 has biased composition (basic and acidic residues); it reads ETNKIKHRNIDLQDQEKHLSQ. Basic and acidic residues predominate over residues 223–248; the sequence is MEQKTPEKTLAAQKREKLQKLKELSK. Threonine 227 is modified (phosphothreonine). A coiled-coil region spans residues 229-256; sequence EKTLAAQKREKLQKLKELSKQRSRQRRS. Acidic residues predominate over residues 273–294; that stretch reads DEVDEEEEEDNYESDEDGDDYI. Position 329 is a phosphoserine (serine 329).

This chain is Coiled-coil domain-containing protein 82 (CCDC82), found in Homo sapiens (Human).